A 98-amino-acid chain; its full sequence is NADH-ubiquinone oxidoreductase chain 4L (98 aa).

3 consecutive transmembrane segments (helical) span residues 1 to 21 (MASI…GVLI), 28 to 48 (STLL…TLLI), and 61 to 81 (LILL…LVTI).

This sequence belongs to the complex I subunit 4L family. As to quaternary structure, core subunit of respiratory chain NADH dehydrogenase (Complex I) which is composed of 45 different subunits.

The protein localises to the mitochondrion inner membrane. It carries out the reaction a ubiquinone + NADH + 5 H(+)(in) = a ubiquinol + NAD(+) + 4 H(+)(out). Functionally, core subunit of the mitochondrial membrane respiratory chain NADH dehydrogenase (Complex I) which catalyzes electron transfer from NADH through the respiratory chain, using ubiquinone as an electron acceptor. Part of the enzyme membrane arm which is embedded in the lipid bilayer and involved in proton translocation. This Thylamys elegans (Elegant fat-tailed mouse opossum) protein is NADH-ubiquinone oxidoreductase chain 4L (MT-ND4L).